The sequence spans 361 residues: Phosphoserine aminotransferase (361 aa).

Arginine 42 contacts L-glutamate. Pyridoxal 5'-phosphate contacts are provided by residues 76–77 (AT), tryptophan 102, threonine 152, aspartate 172, and glutamine 195. Position 196 is an N6-(pyridoxal phosphate)lysine (lysine 196). 237 to 238 (NT) contributes to the pyridoxal 5'-phosphate binding site.

The protein belongs to the class-V pyridoxal-phosphate-dependent aminotransferase family. SerC subfamily. As to quaternary structure, homodimer. Requires pyridoxal 5'-phosphate as cofactor.

The protein localises to the cytoplasm. It carries out the reaction O-phospho-L-serine + 2-oxoglutarate = 3-phosphooxypyruvate + L-glutamate. It catalyses the reaction 4-(phosphooxy)-L-threonine + 2-oxoglutarate = (R)-3-hydroxy-2-oxo-4-phosphooxybutanoate + L-glutamate. Its pathway is amino-acid biosynthesis; L-serine biosynthesis; L-serine from 3-phospho-D-glycerate: step 2/3. The protein operates within cofactor biosynthesis; pyridoxine 5'-phosphate biosynthesis; pyridoxine 5'-phosphate from D-erythrose 4-phosphate: step 3/5. Its function is as follows. Catalyzes the reversible conversion of 3-phosphohydroxypyruvate to phosphoserine and of 3-hydroxy-2-oxo-4-phosphonooxybutanoate to phosphohydroxythreonine. This chain is Phosphoserine aminotransferase, found in Xanthomonas oryzae pv. oryzae (strain MAFF 311018).